The following is a 210-amino-acid chain: ATP-dependent Clp protease proteolytic subunit (210 aa).

The Nucleophile role is filled by S107. H132 is a catalytic residue.

It belongs to the peptidase S14 family. As to quaternary structure, fourteen ClpP subunits assemble into 2 heptameric rings which stack back to back to give a disk-like structure with a central cavity, resembling the structure of eukaryotic proteasomes.

The protein resides in the cytoplasm. It catalyses the reaction Hydrolysis of proteins to small peptides in the presence of ATP and magnesium. alpha-casein is the usual test substrate. In the absence of ATP, only oligopeptides shorter than five residues are hydrolyzed (such as succinyl-Leu-Tyr-|-NHMec, and Leu-Tyr-Leu-|-Tyr-Trp, in which cleavage of the -Tyr-|-Leu- and -Tyr-|-Trp bonds also occurs).. In terms of biological role, cleaves peptides in various proteins in a process that requires ATP hydrolysis. Has a chymotrypsin-like activity. Plays a major role in the degradation of misfolded proteins. The sequence is that of ATP-dependent Clp protease proteolytic subunit from Cereibacter sphaeroides (strain ATCC 17029 / ATH 2.4.9) (Rhodobacter sphaeroides).